A 97-amino-acid chain; its full sequence is Citrate lyase acyl carrier protein (97 aa).

Position 14 is an O-(phosphoribosyl dephospho-coenzyme A)serine (serine 14).

Belongs to the CitD family. As to quaternary structure, oligomer with a subunit composition of (alpha,beta,gamma)6.

Its subcellular location is the cytoplasm. In terms of biological role, covalent carrier of the coenzyme of citrate lyase. This is Citrate lyase acyl carrier protein from Lactobacillus helveticus (strain DPC 4571).